Reading from the N-terminus, the 360-residue chain is Phosphoserine aminotransferase (360 aa).

R42 contacts L-glutamate. Pyridoxal 5'-phosphate contacts are provided by W102, T152, D171, and Q194. Residue K195 is modified to N6-(pyridoxal phosphate)lysine. Position 237 to 238 (237 to 238 (NT)) interacts with pyridoxal 5'-phosphate.

It belongs to the class-V pyridoxal-phosphate-dependent aminotransferase family. SerC subfamily. In terms of assembly, homodimer. It depends on pyridoxal 5'-phosphate as a cofactor.

It localises to the cytoplasm. It carries out the reaction O-phospho-L-serine + 2-oxoglutarate = 3-phosphooxypyruvate + L-glutamate. It catalyses the reaction 4-(phosphooxy)-L-threonine + 2-oxoglutarate = (R)-3-hydroxy-2-oxo-4-phosphooxybutanoate + L-glutamate. It functions in the pathway amino-acid biosynthesis; L-serine biosynthesis; L-serine from 3-phospho-D-glycerate: step 2/3. It participates in cofactor biosynthesis; pyridoxine 5'-phosphate biosynthesis; pyridoxine 5'-phosphate from D-erythrose 4-phosphate: step 3/5. Functionally, catalyzes the reversible conversion of 3-phosphohydroxypyruvate to phosphoserine and of 3-hydroxy-2-oxo-4-phosphonooxybutanoate to phosphohydroxythreonine. This Coxiella burnetii (strain CbuG_Q212) (Coxiella burnetii (strain Q212)) protein is Phosphoserine aminotransferase.